Here is a 43-residue protein sequence, read N- to C-terminus: Jararafibrase-3 (43 aa).

The C-type lectin domain occupies 10–43; sequence MNGLYYKIFDELKAWKDAEMFCRKYKPGWHLASF.

This sequence belongs to the true venom lectin family. As to quaternary structure, monomer. As to expression, expressed by the venom gland.

It localises to the secreted. With respect to regulation, inhibited by 1,10-phenanthroline and EDTA. In terms of biological role, may have both metalloproteinase and lectin activities. Induces local hemorrhage in the skin of rats. Degrades type-IV collagen, gelatin, laminin and fibronectin. Has hemagglutinating activity on red blood cells. The polypeptide is Jararafibrase-3 (Bothrops jararaca (Jararaca)).